The primary structure comprises 952 residues: Eukaryotic translation initiation factor 3 subunit A (952 aa).

Residues His-315 to Pro-491 enclose the PCI domain. Positions Asp-522–Thr-849 form a coiled coil. Residues Glu-757–Arg-797 are compositionally biased toward basic and acidic residues. A disordered region spans residues Glu-757–Ala-952. Positions Ala-798–Ala-809 are enriched in low complexity. Basic and acidic residues predominate over residues Glu-810 to Glu-844. Low complexity-rich tracts occupy residues Arg-856–Ser-878 and Gly-893–Pro-918.

The protein belongs to the eIF-3 subunit A family. Component of the eukaryotic translation initiation factor 3 (eIF-3) complex.

The protein localises to the cytoplasm. Its function is as follows. RNA-binding component of the eukaryotic translation initiation factor 3 (eIF-3) complex, which is involved in protein synthesis of a specialized repertoire of mRNAs and, together with other initiation factors, stimulates binding of mRNA and methionyl-tRNAi to the 40S ribosome. The eIF-3 complex specifically targets and initiates translation of a subset of mRNAs involved in cell proliferation. The chain is Eukaryotic translation initiation factor 3 subunit A from Cryptococcus neoformans var. neoformans serotype D (strain B-3501A) (Filobasidiella neoformans).